The primary structure comprises 129 residues: Large ribosomal subunit protein bL20 (129 aa).

It belongs to the bacterial ribosomal protein bL20 family.

Its function is as follows. Binds directly to 23S ribosomal RNA and is necessary for the in vitro assembly process of the 50S ribosomal subunit. It is not involved in the protein synthesizing functions of that subunit. In Mycolicibacterium smegmatis (strain ATCC 700084 / mc(2)155) (Mycobacterium smegmatis), this protein is Large ribosomal subunit protein bL20.